We begin with the raw amino-acid sequence, 419 residues long: Oligouridylate-binding protein 1B (419 aa).

RRM domains are found at residues 54-128 and 139-217; these read RSVY…WAYA and FNIF…WATK. The interval 217 to 257 is disordered; it reads KGATSGEDKQSSDSKSVVELTSGVSEDGKDTTNGEAPENNA. The residue at position 241 (serine 241) is a Phosphoserine. The 76-residue stretch at 260–335 folds into the RRM 3 domain; that stretch reads TTVYVGNLAP…RQMKCSWGSK (76 aa).

As to quaternary structure, interacts with UBA1A and UBA2A.

The protein localises to the nucleus. Functionally, heterogeneous nuclear ribonucleoprotein (hnRNP)-like protein that acts as a component of the pre-mRNA processing machinery. Functions to facilitate the nuclear maturation of plant pre-mRNAs. The polypeptide is Oligouridylate-binding protein 1B (UBP1B) (Arabidopsis thaliana (Mouse-ear cress)).